The chain runs to 412 residues: Phosphoglycerate kinase (412 aa).

Substrate contacts are provided by residues 22–24, arginine 37, 60–63, arginine 120, and arginine 172; these read DFN and HLGK. ATP contacts are provided by residues lysine 223, glycine 310, glutamate 341, and 368–371; that span reads GGDS.

This sequence belongs to the phosphoglycerate kinase family. In terms of assembly, monomer.

The protein localises to the cytoplasm. The catalysed reaction is (2R)-3-phosphoglycerate + ATP = (2R)-3-phospho-glyceroyl phosphate + ADP. It functions in the pathway carbohydrate degradation; glycolysis; pyruvate from D-glyceraldehyde 3-phosphate: step 2/5. The sequence is that of Phosphoglycerate kinase from Spiroplasma citri.